A 1157-amino-acid polypeptide reads, in one-letter code: uncharacterized protein (1157 aa).

The segment covering 1–10 has biased composition (basic and acidic residues); it reads MDPHWKRHDS. Disordered stretches follow at residues 1-35, 159-233, and 478-498; these read MDPH…QRFG, QTTP…SVEP, and KNQS…GKGP. 2 stretches are compositionally biased toward low complexity: residues 18–31 and 181–197; these read SPSA…PSSA and SAGT…NPNF. Polar residues predominate over residues 208–228; sequence QEWQQSPLESPLSMHSLQESL. In terms of domain architecture, CSD2 spans 501–574; it reads VWFKPSDKRI…KVEYKAILHD (74 aa). The RNB domain occupies 608–921; sequence LRDKLTFMIG…ICVQRQLREA (314 aa). A DIS3L2 C-terminal domain is found at 973–1030; that stretch reads GLVKHKAFVLAVDQEYIDIVIYEFGLERRISLDLLPLSNCDFNEQKHELYLSWRTNAS. The tract at residues 1084 to 1113 is disordered; the sequence is YSKARGNDSTSKTAKSSSGNQDISGDGKLH. Over residues 1090–1106 the composition is skewed to polar residues; it reads NDSTSKTAKSSSGNQDI.

It belongs to the RNR ribonuclease family.

It is found in the cytoplasm. This is an uncharacterized protein from Schizosaccharomyces pombe (strain 972 / ATCC 24843) (Fission yeast).